The chain runs to 104 residues: MKVKKGDTVVVISGKDKGAKGKVIQAFPQRDKVLVEGVNRIKKHTKVSRTERGAQSGGIVTQEAPIHVSNVMVVDSDGQPTRVGYRIGEDGKKVRISRRNGKDI.

This sequence belongs to the universal ribosomal protein uL24 family. As to quaternary structure, part of the 50S ribosomal subunit.

Functionally, one of two assembly initiator proteins, it binds directly to the 5'-end of the 23S rRNA, where it nucleates assembly of the 50S subunit. Its function is as follows. One of the proteins that surrounds the polypeptide exit tunnel on the outside of the subunit. The polypeptide is Large ribosomal subunit protein uL24 (Saccharopolyspora erythraea (strain ATCC 11635 / DSM 40517 / JCM 4748 / NBRC 13426 / NCIMB 8594 / NRRL 2338)).